Reading from the N-terminus, the 286-residue chain is Beta-lactamase SHV-2 (286 aa).

An N-terminal signal peptide occupies residues 1–21 (MRYIRLCIISLLATLPLAVHA). The active-site Acyl-ester intermediate is the serine 66. The cysteines at positions 73 and 119 are disulfide-linked. Glutamate 164 (proton acceptor) is an active-site residue. Position 230 to 232 (230 to 232 (KTG)) interacts with substrate.

The protein belongs to the class-A beta-lactamase family.

It catalyses the reaction a beta-lactam + H2O = a substituted beta-amino acid. Its function is as follows. This enzyme hydrolyzes cefotaxime, ceftazidime and other broad spectrum cephalosporins. The sequence is that of Beta-lactamase SHV-2 (bla) from Klebsiella pneumoniae.